Here is a 509-residue protein sequence, read N- to C-terminus: BPI fold-containing family C protein (509 aa).

An N-terminal signal peptide occupies residues 1-23; that stretch reads MRTKQVPVLWACFLLWSLYIASS. Residues Asn63, Asn79, Asn92, Asn113, and Asn117 are each glycosylated (N-linked (GlcNAc...) asparagine). Cys161 and Cys202 are oxidised to a cystine. Residues Asn215, Asn227, Asn357, Asn374, and Asn457 are each glycosylated (N-linked (GlcNAc...) asparagine).

The protein belongs to the BPI/LBP/Plunc superfamily. BPI/LBP family.

The protein localises to the secreted. The chain is BPI fold-containing family C protein (Bpifc) from Mus musculus (Mouse).